The sequence spans 204 residues: Large ribosomal subunit protein uL4 (204 aa).

Residues 56-79 are disordered; sequence VSGTTAKPYGQKRTGRARQGSLRS.

This sequence belongs to the universal ribosomal protein uL4 family. In terms of assembly, part of the 50S ribosomal subunit.

In terms of biological role, one of the primary rRNA binding proteins, this protein initially binds near the 5'-end of the 23S rRNA. It is important during the early stages of 50S assembly. It makes multiple contacts with different domains of the 23S rRNA in the assembled 50S subunit and ribosome. Its function is as follows. Forms part of the polypeptide exit tunnel. This is Large ribosomal subunit protein uL4 from Wolbachia pipientis subsp. Culex pipiens (strain wPip).